Reading from the N-terminus, the 229-residue chain is Non-structural protein V (229 aa).

Polar residues-rich tracts occupy residues 30 to 46 (ATSQ…SSRT) and 82 to 112 (GRQN…LPSP). The segment at 30–112 (ATSQSSLNKP…MGSDTQLPSP (83 aa)) is disordered. Zn(2+) is bound by residues His178, Cys197, Cys201, Cys213, Cys215, Cys218, Cys222, and Cys225.

It belongs to the paramyxoviruses V protein family.

Functionally, blocks host interferon signaling. The sequence is that of Non-structural protein V (P/V) from Homo sapiens (Human).